A 432-amino-acid polypeptide reads, in one-letter code: Glutamate-1-semialdehyde 2,1-aminomutase 2 (432 aa).

N6-(pyridoxal phosphate)lysine is present on lysine 268.

Belongs to the class-III pyridoxal-phosphate-dependent aminotransferase family. HemL subfamily. As to quaternary structure, homodimer. Pyridoxal 5'-phosphate is required as a cofactor.

Its subcellular location is the cytoplasm. The enzyme catalyses (S)-4-amino-5-oxopentanoate = 5-aminolevulinate. It functions in the pathway porphyrin-containing compound metabolism; protoporphyrin-IX biosynthesis; 5-aminolevulinate from L-glutamyl-tRNA(Glu): step 2/2. This Listeria monocytogenes serovar 1/2a (strain ATCC BAA-679 / EGD-e) protein is Glutamate-1-semialdehyde 2,1-aminomutase 2.